The chain runs to 183 residues: MRGPQLSIHLIGLPGSGKSTVGRHLARRLGLPFIDSDHVIEQRIGGSIRGFFDREGEAAFRDLEEEVILELTEANVPPQVLATGGGVVIRPGNRTRLRERGTVVYLNASPEEIFRHIRHDQTRPLLQVGSPLDRLRELQRERDPLYREAAHFVISPERGKNVAALVQHIAMQLELAGIRPPSP.

15 to 20 (GSGKST) lines the ATP pocket. Serine 19 serves as a coordination point for Mg(2+). Substrate is bound by residues aspartate 37, arginine 61, and glycine 85. An ATP-binding site is contributed by arginine 123. Residue arginine 142 coordinates substrate.

Belongs to the shikimate kinase family. As to quaternary structure, monomer. Requires Mg(2+) as cofactor.

Its subcellular location is the cytoplasm. It carries out the reaction shikimate + ATP = 3-phosphoshikimate + ADP + H(+). It functions in the pathway metabolic intermediate biosynthesis; chorismate biosynthesis; chorismate from D-erythrose 4-phosphate and phosphoenolpyruvate: step 5/7. Functionally, catalyzes the specific phosphorylation of the 3-hydroxyl group of shikimic acid using ATP as a cosubstrate. In Paracidovorax citrulli (strain AAC00-1) (Acidovorax citrulli), this protein is Shikimate kinase.